We begin with the raw amino-acid sequence, 298 residues long: HTH-type transcriptional regulator ArgP (298 aa).

The 57-residue stretch at 4–60 (VDYRWVAALDAVIAQRGFERAAEKLCITQSAVSQRIKQLEKLMAQPLLVREQPPRPT) folds into the HTH lysR-type domain. The segment at residues 21–40 (FERAAEKLCITQSAVSQRIK) is a DNA-binding region (H-T-H motif).

The protein belongs to the LysR transcriptional regulatory family. In terms of assembly, homodimer.

Controls the transcription of genes involved in arginine and lysine metabolism. This chain is HTH-type transcriptional regulator ArgP, found in Photobacterium profundum (strain SS9).